The following is a 686-amino-acid chain: Eomesodermin homolog (686 aa).

Positions 27-46 are disordered; the sequence is GGSGGSAGHLPSAAPSPQKL. Low complexity predominate over residues 34-43; it reads GHLPSAAPSP. The residue at position 107 (Ser107) is a Phosphoserine. Residues 276-456 constitute a DNA-binding region (T-box); the sequence is LWLKFHRHQT…HNPFAKGFRD (181 aa). The interval 571 to 686 is required for transcription activation; it reads AMAGWGGRGS…GGYYAFYTTP (116 aa). Positions 639–686 are disordered; the sequence is ACKRRRLSPSNSSNENSPSIKCEDINAEEYSKDTSKGMGGYYAFYTTP. Residues 646 to 657 are compositionally biased toward low complexity; sequence SPSNSSNENSPS. The span at 659 to 673 shows a compositional bias: basic and acidic residues; that stretch reads KCEDINAEEYSKDTS.

In terms of tissue distribution, expressed in CD8+ T-cells.

It is found in the nucleus. Its function is as follows. Functions as a transcriptional activator playing a crucial role during development. Functions in trophoblast differentiation and later in gastrulation, regulating both mesoderm delamination and endoderm specification. Plays a role in brain development being required for the specification and the proliferation of the intermediate progenitor cells and their progeny in the cerebral cortex. Required for differentiation and migration of unipolar dendritic brush cells. Also involved in the differentiation of CD8+ T-cells during immune response regulating the expression of lytic effector genes. The polypeptide is Eomesodermin homolog (EOMES) (Homo sapiens (Human)).